The following is a 400-amino-acid chain: GTPase-binding protein rid1 (400 aa).

The segment covering Leu-16–Ser-27 has biased composition (polar residues). Residues Leu-16–Met-47 are disordered. The region spanning Pro-39 to Thr-400 is the GBD/FH3 domain.

Its subcellular location is the cytoplasm. The sequence is that of GTPase-binding protein rid1 (rid1) from Schizosaccharomyces pombe (strain 972 / ATCC 24843) (Fission yeast).